The following is a 156-amino-acid chain: Oxidized purine nucleoside triphosphate hydrolase (156 aa).

The 130-residue stretch at Thr3–Arg132 folds into the Nudix hydrolase domain. Thr8 contacts 2-oxo-dATP. O(6)-methyl-dGMP is bound by residues Thr8, Lys23, Asn33, and Phe35 to Lys38. Lys23 contacts 8-oxo-dGTP. 2-oxo-dATP is bound by residues Asn33 and Phe35–Lys38. 5 residues coordinate Mg(2+): Gly36, Glu52, Glu55, Glu56, and Glu100. Positions Gly37–Gly58 match the Nudix box motif. Residue Trp117 to Asp120 coordinates 2-oxo-dATP. Trp117 to Asp120 lines the O(6)-methyl-dGMP pocket.

The protein belongs to the Nudix hydrolase family. Monomer. It depends on Mg(2+) as a cofactor.

It is found in the cytoplasm. It localises to the cytosol. The protein resides in the mitochondrion matrix. The protein localises to the nucleus. It catalyses the reaction 2-oxo-dATP + H2O = 2-oxo-dAMP + diphosphate + H(+). It carries out the reaction 2-oxo-ATP + H2O = 2-oxo-AMP + diphosphate + H(+). The catalysed reaction is 8-oxo-dGTP + H2O = 8-oxo-dGMP + diphosphate + H(+). The enzyme catalyses 8-oxo-dATP + H2O = 8-oxo-dAMP + diphosphate + H(+). It catalyses the reaction O(6)-methyl-dGTP + H2O = O(6)-methyl-dGMP + diphosphate + H(+). It carries out the reaction N(6)-methyl-dATP + H2O = N(6)-methyl-dAMP + diphosphate + H(+). The catalysed reaction is N(6)-methyl-ATP + H2O = N(6)-methyl-AMP + diphosphate + H(+). With respect to regulation, inhibited by TH588. Oxidized purine nucleoside triphosphate hydrolase which is a prominent sanitizer of the oxidized nucleotide pool. Catalyzes the hydrolysis of 2-oxo-dATP (2-hydroxy-dATP) into 2-oxo-dAMP. Also has a significant hydrolase activity toward 2-oxo-ATP, 8-oxo-dGTP and 8-oxo-dATP. Through the hydrolysis of oxidized purine nucleoside triphosphates, prevents their incorporation into DNA and the subsequent transversions A:T to C:G and G:C to T:A. Also catalyzes the hydrolysis of methylated purine nucleoside triphosphate preventing their integration into DNA. Through this antimutagenic activity protects cells from oxidative stress. The protein is Oxidized purine nucleoside triphosphate hydrolase (nudt1) of Danio rerio (Zebrafish).